A 641-amino-acid polypeptide reads, in one-letter code: WW domain-binding protein 11 (641 aa).

Residues 1–11 (MGRRSTSSTKS) are compositionally biased toward polar residues. Residues 1 to 37 (MGRRSTSSTKSGKFMNPTDQARKEARKRELKKNKKQR) form a disordered region. Residues 1-45 (MGRRSTSSTKSGKFMNPTDQARKEARKRELKKNKKQRMMVRAAVL) form a required for nuclear import region. Lysine 13 carries the N6-acetyllysine modification. Residues 28–37 (RELKKNKKQR) are compositionally biased toward basic residues. A coiled-coil region spans residues 75–133 (EKVLKDKRKKLRETFERILRLYEKENPDIYKELRKLEVEYEQKRAQLSQYFDAVKNAQH). Serine 181 is modified (phosphoserine). Residues 188-213 (HGVPRLPPGRKPPGPPPGPPPPQVLQ) form a disordered region. Arginine 192 is subject to Omega-N-methylarginine. The segment covering 192-210 (RLPPGRKPPGPPPGPPPPQ) has biased composition (pro residues). Residues 217-221 (RKVGF) form an interaction with PP1 region. Tyrosine 236 carries the post-translational modification Phosphotyrosine. Positions 236–550 (YSPELAQRGH…IQRPKADDAS (315 aa)) are disordered. Phosphoserine is present on serine 237. Residues 253–263 (SEDDGYPEDMD) are compositionally biased toward acidic residues. The span at 276-304 (TDRSDAESDGDEFGHREDSERDNTEEKKS) shows a compositional bias: basic and acidic residues. Phosphoserine occurs at positions 279 and 283. The interaction with PP1 stretch occupies residues 306–310 (LSVRF). Positions 351-365 (EFSEEEDADDSDDSE) are enriched in acidic residues. 3 positions are modified to phosphoserine: serine 353, serine 361, and serine 364. A compositionally biased stretch (basic and acidic residues) spans 366 to 380 (AEKQSQKQHKDDGHS). Low complexity predominate over residues 381-404 (DSTAAASSQQQAPPQSAPASQIQA). Pro residues-rich tracts occupy residues 405–447 (PPMP…PPGM), 456–504 (RLLP…PPRP), and 510–530 (PLVP…PLPN). The PGR motif lies at 455–466 (PRLLPPGPPPGR). A Glycyl lysine isopeptide (Lys-Gly) (interchain with G-Cter in SUMO2) cross-link involves residue lysine 557. An N6-acetyllysine modification is found at lysine 565. Lysine 572 is covalently cross-linked (Glycyl lysine isopeptide (Lys-Gly) (interchain with G-Cter in SUMO2)). The disordered stretch occupies residues 588–620 (ENKGATAVPQRRSEDDSAVPVAKAAPRSGPSVA). A Phosphoserine modification is found at serine 600. The required for nuclear export stretch occupies residues 633–641 (FMKEMEGLL).

As to quaternary structure, interacts via the PGR motif with PQBP1 in the nucleus. Interacts with the WW domains of WBP4. Interacts with PPP1CA, PPP1CB and PPP1CC. Ubiquitously expressed, with highest levels in testis.

It is found in the nucleus. The protein resides in the cytoplasm. Its function is as follows. Activates pre-mRNA splicing. May inhibit PP1 phosphatase activity. The polypeptide is WW domain-binding protein 11 (Wbp11) (Mus musculus (Mouse)).